Consider the following 149-residue polypeptide: Sec-independent protein translocase protein TatB (149 aa).

A helical transmembrane segment spans residues 1–22; it reads MFDGIGFMELLLIGVLGLIVLG. Residues 86-113 are compositionally biased toward polar residues; that stretch reads LKQAAQSVNRPYQVQDTPSAQDNQIHNP. Residues 86–149 form a disordered region; sequence LKQAAQSVNR…DPRSNTKANG (64 aa). A compositionally biased stretch (low complexity) spans 114-135; sequence ASQTVSTEASSTSASSAPKSES.

Belongs to the TatB family. The Tat system comprises two distinct complexes: a TatABC complex, containing multiple copies of TatA, TatB and TatC subunits, and a separate TatA complex, containing only TatA subunits. Substrates initially bind to the TatABC complex, which probably triggers association of the separate TatA complex to form the active translocon.

It is found in the cell inner membrane. Functionally, part of the twin-arginine translocation (Tat) system that transports large folded proteins containing a characteristic twin-arginine motif in their signal peptide across membranes. Together with TatC, TatB is part of a receptor directly interacting with Tat signal peptides. TatB may form an oligomeric binding site that transiently accommodates folded Tat precursor proteins before their translocation. The protein is Sec-independent protein translocase protein TatB of Shewanella oneidensis (strain ATCC 700550 / JCM 31522 / CIP 106686 / LMG 19005 / NCIMB 14063 / MR-1).